Here is a 540-residue protein sequence, read N- to C-terminus: Cytochrome P450 monooxygenase ptmG (540 aa).

The N-linked (GlcNAc...) asparagine glycan is linked to Asn17. The next 2 membrane-spanning stretches (helical) occupy residues 20 to 40 (VMTLGQILVIPVALLVVYICI) and 325 to 345 (AAFLIGATSGASVISYAFLLL). Cys474 provides a ligand contact to heme.

It belongs to the cytochrome P450 family. Requires heme as cofactor.

It localises to the membrane. It functions in the pathway secondary metabolite biosynthesis. Its function is as follows. Cytochrome P450 monooxygenase; part of the gene cluster that mediates the biosynthesis of the indole diterpenes penitrems. The geranylgeranyl diphosphate (GGPP) synthase ptmG catalyzes the first step in penitrem biosynthesis via conversion of farnesyl pyrophosphate and isopentyl pyrophosphate into geranylgeranyl pyrophosphate (GGPP). Condensation of indole-3-glycerol phosphate with GGPP by the prenyl transferase ptmC then forms 3-geranylgeranylindole (3-GGI). Epoxidation by the FAD-dependent monooxygenase ptmM leads to a epoxidized-GGI that is substrate of the terpene cyclase ptmB for cyclization to yield paspaline. Paspaline is subsequently converted to 13-desoxypaxilline by the cytochrome P450 monooxygenase ptmP, the latter being then converted to paxilline by the cytochrome P450 monooxygenase ptmQ. Paxilline is converted to beta-paxitriol via C-10 ketoreduction by the short-chain dehydrogenase ptmH which can be monoprenylated at the C-20 by the indole diterpene prenyltransferase ptmD. A two-step elimination (acetylation and elimination) process performed by the O-acetyltransferase ptmV and ptmI leads to the production of the prenylated form of penijanthine. The FAD-linked oxidoreductase ptmO then converts the prenylated form of penijanthine into PC-M5 which is in turn transformed into PC-M4 by the aromatic dimethylallyltransferase ptmE. Five sequential oxidative transformations performed by the cytochrome P450 monooxygenases ptmK, ptmU, ptmL, ptmN and ptmJ yield the various penitrem compounds. PtmK, ptmU and ptmM are involved in the formation of the key bicyclic ring of penitrem C via the formation of the intermediates secopenitrem D and penitrem D. PtmL catalyzes the epoxidation of penitrem D and C to yield penitrem B and F, respectively. PtmJ catalyzes the last benzylic hydroxylation to convert penitrem B to prenitrem E and penitrem F to penitrem A. This is Cytochrome P450 monooxygenase ptmG from Penicillium ochrochloron.